Here is a 147-residue protein sequence, read N- to C-terminus: UPF0735 ACT domain-containing protein BPUM_2431 (147 aa).

The region spanning 70–145 is the ACT domain; it reads TLFFHLEDRS…FVEKVEILGS (76 aa).

The protein belongs to the UPF0735 family.

This is UPF0735 ACT domain-containing protein BPUM_2431 from Bacillus pumilus (strain SAFR-032).